The chain runs to 85 residues: UPF0335 protein WP0746 (85 aa).

This sequence belongs to the UPF0335 family.

This Wolbachia pipientis subsp. Culex pipiens (strain wPip) protein is UPF0335 protein WP0746.